Here is a 236-residue protein sequence, read N- to C-terminus: Factor V activator RVV-V alpha (236 aa).

In terms of domain architecture, Peptidase S1 spans 1–227 (VVGGDECNIN…YNNWIQNIIA (227 aa)). Cystine bridges form between Cys7–Cys141, Cys28–Cys44, Cys76–Cys234, Cys120–Cys188, Cys152–Cys167, and Cys178–Cys203. Active-site charge relay system residues include His43 and Asp88. Ser182 acts as the Charge relay system in catalysis. N-linked (GlcNAc...) asparagine glycosylation is present at Asn229.

It belongs to the peptidase S1 family. Snake venom subfamily. As to quaternary structure, monomer. As to expression, expressed by the venom gland.

The protein resides in the secreted. It catalyses the reaction Fully activates human clotting factor V by a single cleavage at the 1545-Trp-Tyr-Leu-Arg-|-Ser-Asn-Asn-Gly-1552 bond. Cattle, but not rabbit, factor V is cleaved, and no other proteins of the clotting system are attacked. Esterase activity is observed on Bz-Arg-OEt and Tos-Arg-OMe, and amidase activity on Phe-pipecolyl-Arg-NHPhNO2.. With respect to regulation, inhibited by D-Phe-Pro-Arg-chloromethyl ketone (FPRCK) (97%), PMSF (76%), and benzamidine (50%). Is not inhibited by BPTI, antithrombin and EDTA. Functionally, venom serine protease that activates factor V (F5) in a calcium-independent manner. It cleaves the Arg(1545)-Ser(1546) linkage in the human factor V molecule. Induces the coagulation of mammalian plasma. This Daboia siamensis (Eastern Russel's viper) protein is Factor V activator RVV-V alpha.